Consider the following 491-residue polypeptide: Aspartyl/glutamyl-tRNA(Asn/Gln) amidotransferase subunit B (491 aa).

This sequence belongs to the GatB/GatE family. GatB subfamily. In terms of assembly, heterotrimer of A, B and C subunits.

The enzyme catalyses L-glutamyl-tRNA(Gln) + L-glutamine + ATP + H2O = L-glutaminyl-tRNA(Gln) + L-glutamate + ADP + phosphate + H(+). It catalyses the reaction L-aspartyl-tRNA(Asn) + L-glutamine + ATP + H2O = L-asparaginyl-tRNA(Asn) + L-glutamate + ADP + phosphate + 2 H(+). In terms of biological role, allows the formation of correctly charged Asn-tRNA(Asn) or Gln-tRNA(Gln) through the transamidation of misacylated Asp-tRNA(Asn) or Glu-tRNA(Gln) in organisms which lack either or both of asparaginyl-tRNA or glutaminyl-tRNA synthetases. The reaction takes place in the presence of glutamine and ATP through an activated phospho-Asp-tRNA(Asn) or phospho-Glu-tRNA(Gln). This Paraburkholderia xenovorans (strain LB400) protein is Aspartyl/glutamyl-tRNA(Asn/Gln) amidotransferase subunit B.